Consider the following 175-residue polypeptide: Nucleoside triphosphate/diphosphate phosphatase (175 aa).

Catalysis depends on Arg23, which acts as the Proton donor. Residues Asn87, Asp103, Asp105, Asp107, Asp120, and Glu123 each contribute to the Mg(2+) site.

Belongs to the Ntdp family. Mg(2+) is required as a cofactor.

The enzyme catalyses a ribonucleoside 5'-triphosphate + H2O = a ribonucleoside 5'-diphosphate + phosphate + H(+). It catalyses the reaction a ribonucleoside 5'-diphosphate + H2O = a ribonucleoside 5'-phosphate + phosphate + H(+). In terms of biological role, has nucleoside phosphatase activity towards nucleoside triphosphates and nucleoside diphosphates. The polypeptide is Nucleoside triphosphate/diphosphate phosphatase (Oceanobacillus iheyensis (strain DSM 14371 / CIP 107618 / JCM 11309 / KCTC 3954 / HTE831)).